We begin with the raw amino-acid sequence, 261 residues long: Carnitinyl-CoA dehydratase (261 aa).

Glu111 functions as the Nucleophile in the catalytic mechanism. Residue Glu131 is the Proton acceptor of the active site.

This sequence belongs to the enoyl-CoA hydratase/isomerase family.

The catalysed reaction is (R)-carnitinyl-CoA = crotonobetainyl-CoA + H2O. The protein operates within amine and polyamine metabolism; carnitine metabolism. Catalyzes the reversible dehydration of L-carnitinyl-CoA to crotonobetainyl-CoA. The sequence is that of Carnitinyl-CoA dehydratase from Shigella flexneri.